The chain runs to 715 residues: MNRLAKTDYSRWRMLDEDGKHTWHYLDDDEAARTWPQTLADKYYLGLPLDLPDLPTATSPLDSAINGLKFFSKLQLPPGNWGCEYGGPMFLLPGVVIAWVVTETPIPQAYAIEIKNYLMARANPVDGGWGLHSEGDSSVFGTSLNYTVLRLLGVDSEHPVMVQARGLLHRLGGALNAPHWSKFWLAVLGVCDWEVVNPVPPEAWLLPDWVPVAPWRWWVHIRQVFLPMSWIWSKRWTAAETDVVRALRRELFVQPWESIEWAAHRNDIAPTDNYHPKSWLLNSVNWILSNIWIPYLRPRSLATRAEDWVSKLIDMEDANSDYADLASVNGPLNMIVCYIRDGPDSYSVRRHRERMEEFLWVNKEGMLANGTNGVQCWDTAFLIQAVWSAGLAEDAQFKPMLVQALEFLDRQQIRENCQDQGVCYRHVRKGAWAFSNRDQGYGVSDCISEALKAVIVLQKEADGYPQLLEDQRIFDAVDTLLTYQNPSGGCASYEPTRGSEYLEMLNTAEVFGRIMVEYDYPECTSAVLTALVLFSKHWPDYRREEIQTFIQRGVDFIKRAQRPDGSWYGSWAVCFTYGTMFALECLRSAGETYENSEHVRRGCEFLLSKQREDGGWSESFQSCEQMTYIEHPTGSQVVQTAFAIIAVLSVDYPDVEPIHRGVRMIMSRQQRNGEWLQEGIEGIFNKSCAITYPNYKFIFPILALGKFGRKYPHLV.

Residues 111–153 (AIEIKNYLMARANPVDGGWGLHSEGDSSVFGTSLNYTVLRLLG) form a PFTB 1 repeat. The active-site Proton donor is the Asp445. PFTB repeat units follow at residues 550–590 (IQRG…RSAG) and 599–640 (VRRG…VVQT).

It belongs to the terpene cyclase/mutase family.

Its subcellular location is the lipid droplet. It is found in the endoplasmic reticulum membrane. It catalyses the reaction (S)-2,3-epoxysqualene = lanosterol. It participates in steroid metabolism; ergosterol biosynthesis. Lanosterol synthase; part of the third module of ergosterol biosynthesis pathway that includes the late steps of the pathway. ERG7A and ERG7B catalyze the cyclization of (S)-2,3 oxidosqualene to lanosterol, a reaction that forms the sterol core. The third module or late pathway involves the ergosterol synthesis itself through consecutive reactions that mainly occur in the endoplasmic reticulum (ER) membrane. Firstly, the squalene synthase erg9 catalyzes the condensation of 2 farnesyl pyrophosphate moieties to form squalene, which is the precursor of all steroids. Squalene synthase is crucial for balancing the incorporation of farnesyl diphosphate (FPP) into sterol and nonsterol isoprene synthesis. Secondly, squalene is converted into lanosterol by the consecutive action of the squalene epoxidase erg1 and the lanosterol synthase erg7. Then, the delta(24)-sterol C-methyltransferase erg6 methylates lanosterol at C-24 to produce eburicol. Eburicol is the substrate of the sterol 14-alpha demethylase encoded by cyp51A and cyp51B, to yield 4,4,24-trimethyl ergosta-8,14,24(28)-trienol. The C-14 reductase erg24 then reduces the C14=C15 double bond which leads to 4,4-dimethylfecosterol. A sequence of further demethylations at C-4, involving the C-4 demethylation complex containing the C-4 methylsterol oxidases erg25A or erg25B, the sterol-4-alpha-carboxylate 3-dehydrogenase erg26 and the 3-keto-steroid reductase erg27, leads to the production of fecosterol via 4-methylfecosterol. The C-8 sterol isomerase erg2 then catalyzes the reaction which results in unsaturation at C-7 in the B ring of sterols and thus converts fecosterol to episterol. The sterol-C5-desaturase erg3B then catalyzes the introduction of a C-5 double bond in the B ring to produce 5-dehydroepisterol. The 2 other sterol-C5-desaturases, erg3A and erg3C, seem to be less important in ergosterol biosynthesis. The C-22 sterol desaturase erg5 further converts 5-dehydroepisterol into ergosta-5,7,22,24(28)-tetraen-3beta-ol by forming the C-22(23) double bond in the sterol side chain. Finally, ergosta-5,7,22,24(28)-tetraen-3beta-ol is substrate of the C-24(28) sterol reductases erg4A and erg4B to produce ergosterol. Possible alternative sterol biosynthetic pathways might exist from fecosterol to ergosterol, depending on the activities of the erg3 isoforms. This chain is Lanosterol synthase erg7B, found in Aspergillus fumigatus (strain ATCC MYA-4609 / CBS 101355 / FGSC A1100 / Af293) (Neosartorya fumigata).